We begin with the raw amino-acid sequence, 175 residues long: Sec-independent protein translocase protein TatB (175 aa).

Residues Met1–Gly21 form a helical membrane-spanning segment. 2 disordered regions span residues Gly104 to Trp132 and Ser155 to Phe175.

This sequence belongs to the TatB family. In terms of assembly, the Tat system comprises two distinct complexes: a TatABC complex, containing multiple copies of TatA, TatB and TatC subunits, and a separate TatA complex, containing only TatA subunits. Substrates initially bind to the TatABC complex, which probably triggers association of the separate TatA complex to form the active translocon.

It localises to the cell inner membrane. Part of the twin-arginine translocation (Tat) system that transports large folded proteins containing a characteristic twin-arginine motif in their signal peptide across membranes. Together with TatC, TatB is part of a receptor directly interacting with Tat signal peptides. TatB may form an oligomeric binding site that transiently accommodates folded Tat precursor proteins before their translocation. In Paraburkholderia xenovorans (strain LB400), this protein is Sec-independent protein translocase protein TatB.